We begin with the raw amino-acid sequence, 201 residues long: Recombination protein RecR (201 aa).

The C4-type zinc-finger motif lies at 60 to 75 (CSCCGNVDTSDPCTIC). In terms of domain architecture, Toprim spans 83–178 (TTLIVVEDVS…RVTRLAHGVP (96 aa)).

Belongs to the RecR family.

May play a role in DNA repair. It seems to be involved in an RecBC-independent recombinational process of DNA repair. It may act with RecF and RecO. The chain is Recombination protein RecR from Brucella anthropi (strain ATCC 49188 / DSM 6882 / CCUG 24695 / JCM 21032 / LMG 3331 / NBRC 15819 / NCTC 12168 / Alc 37) (Ochrobactrum anthropi).